A 31-amino-acid chain; its full sequence is Cyclotide mden-N (31 aa).

The cyclopeptide (Gly-Asn) cross-link spans 1 to 31 (GTIPCGESCVYIPCLTSALGCSCKNKVCYRN). 3 disulfides stabilise this stretch: cysteine 5–cysteine 21, cysteine 9–cysteine 23, and cysteine 14–cysteine 28.

Belongs to the cyclotide family. Bracelet subfamily. In terms of processing, this is a cyclic peptide.

In terms of biological role, probably participates in a plant defense mechanism. This is Cyclotide mden-N from Melicytus dentatus (Tree violet).